A 173-amino-acid chain; its full sequence is Alpha-crystallin A chain (173 aa).

An N-acetylmethionine modification is found at methionine 1. The required for complex formation with BFSP1 and BFSP2 stretch occupies residues 1 to 63; the sequence is MDIAIQHPWF…RSVLDSGVSE (63 aa). Glutamine 6 is subject to Deamidated glutamine; partial. Position 45 is a phosphoserine (serine 45). Glutamine 50 is modified (deamidated glutamine; partial). A sHSP domain is found at 52–162; the sequence is LFRSVLDSGV…GHSERAIPVS (111 aa). Lysine 70 bears the N6-acetyllysine mark. Position 90 is a deamidated glutamine; partial (glutamine 90). Lysine 99 carries the N6-acetyllysine modification. Position 100 (histidine 100) interacts with Zn(2+). Residue asparagine 101 is modified to Deamidated asparagine; partial. Positions 102 and 107 each coordinate Zn(2+). Serine 122 carries the phosphoserine modification. Asparagine 123 is modified (deamidated asparagine; partial). The segment at 144–173 is disordered; it reads PKIPSGMDAGHSERAIPVSREEKPSSAPSS. Positions 153-167 are enriched in basic and acidic residues; that stretch reads GHSERAIPVSREEKP. Zn(2+) is bound at residue histidine 154. The O-linked (GlcNAc) serine glycan is linked to serine 162.

The protein belongs to the small heat shock protein (HSP20) family. Heteromer composed of three CRYAA and one CRYAB subunits. Inter-subunit bridging via zinc ions enhances stability, which is crucial as there is no protein turn over in the lens. Can also form homodimers and homotetramers (dimers of dimers) which serve as the building blocks of homooligomers. Within homooligomers, the zinc-binding motif is created from residues of 3 different molecules. His-100 and Glu-102 from one molecule are ligands of the zinc ion, and His-107 and His-154 residues from additional molecules complete the site with tetrahedral coordination geometry. Part of a complex required for lens intermediate filament formation composed of BFSP1, BFSP2 and CRYAA. Acetylation at Lys-70 may increase chaperone activity. Post-translationally, undergoes age-dependent proteolytical cleavage at the C-terminus.

It is found in the cytoplasm. The protein resides in the nucleus. Its function is as follows. Contributes to the transparency and refractive index of the lens. Acts as a chaperone, preventing aggregation of various proteins under a wide range of stress conditions. Required for the correct formation of lens intermediate filaments as part of a complex composed of BFSP1, BFSP2 and CRYAA. The protein is Alpha-crystallin A chain (CRYAA) of Ceratotherium simum (White rhinoceros).